A 391-amino-acid chain; its full sequence is Protein CAJ1 (391 aa).

Positions 4–73 constitute a J domain; the sequence is ETEYYDILGI…RSKYDQFGKE (70 aa). A disordered region spans residues 119 to 161; that stretch reads KEDEEGTAATETEKADESTDGGMVKHDTNKAESLKKDKLSKEQ. Residues 129-161 show a composition bias toward basic and acidic residues; sequence ETEKADESTDGGMVKHDTNKAESLKKDKLSKEQ. Residue lysine 132 forms a Glycyl lysine isopeptide (Lys-Gly) (interchain with G-Cter in ubiquitin) linkage.

The chain is Protein CAJ1 (CAJ1) from Saccharomyces cerevisiae (strain ATCC 204508 / S288c) (Baker's yeast).